Consider the following 522-residue polypeptide: Biotin-dependent long chain acyl-coenzyme A carboxylase beta4 subunit (522 aa).

The CoA carboxyltransferase N-terminal domain maps to 11 to 261 (TAEKLAELRE…NCFDKPPVVN (251 aa)). Residues 270 to 503 (GHDLELDSIV…RLLLRKSMHL (234 aa)) enclose the CoA carboxyltransferase C-terminal domain.

It belongs to the AccD/PCCB family. As to quaternary structure, the biotin-dependent long-chain acyl-CoA carboxylase (LCC) complex is composed of AccA3, which contains the biotin carboxylase (BC) and biotin carboxyl carrier protein (BCCP) domains, and AccD4, which contains the carboxyl transferase (CT) domain. The complex also contains the beta5 subunit AccD5 and the epsilon subunit AccE5. The four subunits are essential for activity, but AccD5, together with AccE5, probably plays a structural role rather than a catalytic one.

Functionally, component of a biotin-dependent acyl-CoA carboxylase complex. This subunit transfers the CO2 from carboxybiotin to the CoA ester substrate. When associated with the alpha3 subunit AccA3, the beta5 subunit AccD5 and the epsilon subunit AccE5, forms the LCC complex, which is involved in the carboxylation of long chain acyl-CoA. The LCC complex can use C16-C24 substrates, the highest specific activity is obtained with carboxy-C20-CoA. Has low activity with acetyl-CoA and propionyl-CoA. This Mycobacterium tuberculosis (strain ATCC 25618 / H37Rv) protein is Biotin-dependent long chain acyl-coenzyme A carboxylase beta4 subunit.